A 442-amino-acid chain; its full sequence is Protein translocase subunit SecF (442 aa).

The segment at 1–39 is disordered; it reads MASKAKTGRDDEATSAVELTEATESAVARTDGDSTTDTA. 6 helical membrane-spanning segments follow: residues 67-87, 187-207, 218-238, 243-263, 301-321, and 331-351; these read WFGV…FRGF, ITKK…LYIT, AITA…LVGF, ATVI…VIVF, LIGV…LGVG, and LIGI…LLVT. The disordered stretch occupies residues 366–442; the sequence is VLKRRNSGSP…PTGKRNAGRR (77 aa). A compositionally biased stretch (low complexity) spans 402 to 432; the sequence is QASSQSAPRAAQGSSKPAPGARPVRPVGTRR. Over residues 433 to 442 the composition is skewed to basic residues; that stretch reads PTGKRNAGRR.

Belongs to the SecD/SecF family. SecF subfamily. As to quaternary structure, forms a complex with SecD. Part of the essential Sec protein translocation apparatus which comprises SecA, SecYEG and auxiliary proteins SecDF. Other proteins may also be involved.

It is found in the cell membrane. In terms of biological role, part of the Sec protein translocase complex. Interacts with the SecYEG preprotein conducting channel. SecDF uses the proton motive force (PMF) to complete protein translocation after the ATP-dependent function of SecA. The chain is Protein translocase subunit SecF from Mycobacterium tuberculosis (strain ATCC 25618 / H37Rv).